The chain runs to 271 residues: Pyrroline-5-carboxylate reductase (271 aa).

The protein belongs to the pyrroline-5-carboxylate reductase family.

Its subcellular location is the cytoplasm. The catalysed reaction is L-proline + NADP(+) = (S)-1-pyrroline-5-carboxylate + NADPH + 2 H(+). It catalyses the reaction L-proline + NAD(+) = (S)-1-pyrroline-5-carboxylate + NADH + 2 H(+). Its pathway is amino-acid biosynthesis; L-proline biosynthesis; L-proline from L-glutamate 5-semialdehyde: step 1/1. Functionally, catalyzes the reduction of 1-pyrroline-5-carboxylate (PCA) to L-proline. This chain is Pyrroline-5-carboxylate reductase, found in Staphylococcus aureus (strain Mu50 / ATCC 700699).